We begin with the raw amino-acid sequence, 193 residues long: UPF0215 protein PH0071 (193 aa).

This sequence belongs to the UPF0215 family.

This chain is UPF0215 protein PH0071, found in Pyrococcus horikoshii (strain ATCC 700860 / DSM 12428 / JCM 9974 / NBRC 100139 / OT-3).